Here is a 239-residue protein sequence, read N- to C-terminus: Dolichyldiphosphatase (239 aa).

Topologically, residues 1–34 are lumenal; it reads MNSTAAAINPNPNVIPFDDTYILYDSHDFLSFLS. A helical transmembrane segment spans residues 35–55; sequence AYFSLMPILVLAFYLSWFIIT. The Cytoplasmic portion of the chain corresponds to 56–131; the sequence is RELEACIVAF…KIYTSWKNLN (76 aa). The chain crosses the membrane as a helical span at residues 132–152; that stretch reads FLEKCIFSGALALLSFCVCFS. Residues 153 to 164 are Lumenal-facing; sequence RVYLHYHNLDQV. The helical transmembrane segment at 165–185 threads the bilayer; sequence IVGFSVGALTGSLYFFIVGII. Residues 186–239 are Cytoplasmic-facing; that stretch reads RELGLINWFLKLRIVRLFYMTDSYNLAPLTLKENYEAYWKRINQRSFNDKSKRD.

The protein belongs to the dolichyldiphosphatase family.

It localises to the endoplasmic reticulum membrane. The enzyme catalyses a di-trans,poly-cis-dolichyl diphosphate + H2O = a di-trans,poly-cis-dolichyl phosphate + phosphate + H(+). The protein operates within protein modification; protein glycosylation. In terms of biological role, non-essential protein which is required for efficient N-glycosylation. Necessary for maintaining optimal levels of dolichol-linked oligosaccharides. Hydrolyzes dolichyl pyrophosphate at a very high rate and dolichyl monophosphate at a much lower rate. Does not act on phosphatidate. The chain is Dolichyldiphosphatase (CAX4) from Saccharomyces cerevisiae (strain ATCC 204508 / S288c) (Baker's yeast).